The sequence spans 569 residues: Proline--tRNA ligase (569 aa).

It belongs to the class-II aminoacyl-tRNA synthetase family. ProS type 1 subfamily. As to quaternary structure, homodimer.

It localises to the cytoplasm. The catalysed reaction is tRNA(Pro) + L-proline + ATP = L-prolyl-tRNA(Pro) + AMP + diphosphate. Functionally, catalyzes the attachment of proline to tRNA(Pro) in a two-step reaction: proline is first activated by ATP to form Pro-AMP and then transferred to the acceptor end of tRNA(Pro). As ProRS can inadvertently accommodate and process non-cognate amino acids such as alanine and cysteine, to avoid such errors it has two additional distinct editing activities against alanine. One activity is designated as 'pretransfer' editing and involves the tRNA(Pro)-independent hydrolysis of activated Ala-AMP. The other activity is designated 'posttransfer' editing and involves deacylation of mischarged Ala-tRNA(Pro). The misacylated Cys-tRNA(Pro) is not edited by ProRS. The protein is Proline--tRNA ligase of Campylobacter jejuni subsp. jejuni serotype O:2 (strain ATCC 700819 / NCTC 11168).